A 188-amino-acid chain; its full sequence is NADH-quinone oxidoreductase subunit B 1 (188 aa).

Positions 32, 33, 98, and 128 each coordinate [4Fe-4S] cluster. Residues 153-188 (VGGVSRPDALASPADALPPRAADSLTAPPVRPPDPS) are disordered. A compositionally biased stretch (low complexity) spans 157–177 (SRPDALASPADALPPRAADSL).

This sequence belongs to the complex I 20 kDa subunit family. As to quaternary structure, NDH-1 is composed of 14 different subunits. Subunits NuoB, C, D, E, F, and G constitute the peripheral sector of the complex. It depends on [4Fe-4S] cluster as a cofactor.

It is found in the cell membrane. It carries out the reaction a quinone + NADH + 5 H(+)(in) = a quinol + NAD(+) + 4 H(+)(out). Functionally, NDH-1 shuttles electrons from NADH, via FMN and iron-sulfur (Fe-S) centers, to quinones in the respiratory chain. The immediate electron acceptor for the enzyme in this species is believed to be a menaquinone. Couples the redox reaction to proton translocation (for every two electrons transferred, four hydrogen ions are translocated across the cytoplasmic membrane), and thus conserves the redox energy in a proton gradient. This Salinispora tropica (strain ATCC BAA-916 / DSM 44818 / JCM 13857 / NBRC 105044 / CNB-440) protein is NADH-quinone oxidoreductase subunit B 1 (nuoB1).